A 1877-amino-acid polypeptide reads, in one-letter code: Protein TIC 214 (1877 aa).

The next 6 helical transmembrane spans lie at 18-38, 67-87, 90-110, 127-147, 175-195, and 224-244; these read IINS…FSIG, FIAG…HLAL, PHTI…WNNH, LSIQ…HFIL, VGWL…LVWI, and IFSI…PSPI. Basic and acidic residues predominate over residues 249–258; it reads FKETSETEER. The tract at residues 249 to 308 is disordered; it reads FKETSETEERGEGEEETDVEIETTFETKGTRQEQEGSTEEDPSLFSEEKEDPDKIDEREE. Acidic residues-rich tracts occupy residues 259–271 and 284–298; these read GEGE…EIET and GSTE…EEKE. Over residues 299 to 308 the composition is skewed to basic and acidic residues; sequence DPDKIDEREE.

It belongs to the TIC214 family. As to quaternary structure, part of the Tic complex.

It is found in the plastid. It localises to the chloroplast inner membrane. In terms of biological role, involved in protein precursor import into chloroplasts. May be part of an intermediate translocation complex acting as a protein-conducting channel at the inner envelope. This Eucalyptus globulus subsp. globulus (Tasmanian blue gum) protein is Protein TIC 214.